Reading from the N-terminus, the 428-residue chain is D-amino acid dehydrogenase (428 aa).

Position 3-17 (3-17) interacts with FAD; that stretch reads VVVLGSGVVGVTSAY.

Belongs to the DadA oxidoreductase family. FAD serves as cofactor.

It catalyses the reaction a D-alpha-amino acid + A + H2O = a 2-oxocarboxylate + AH2 + NH4(+). It functions in the pathway amino-acid degradation; D-alanine degradation; NH(3) and pyruvate from D-alanine: step 1/1. Oxidative deamination of D-amino acids. This Paraburkholderia phytofirmans (strain DSM 17436 / LMG 22146 / PsJN) (Burkholderia phytofirmans) protein is D-amino acid dehydrogenase.